The primary structure comprises 940 residues: Acetyl-coenzyme A synthetase (940 aa).

The first 33 residues, 1–33 (MCCAIWSASRAPACSASQLSSSHAVRPSVVPDA), serve as a signal peptide directing secretion. A unknown region spans residues 1 to 289 (MCCAIWSASR…VQRSVTRLTA (289 aa)). 3 disordered regions span residues 70 to 127 (TARA…RPRC), 157 to 202 (VAPP…ADSA), and 224 to 274 (ASSQ…QQTC). Polar residues-rich tracts occupy residues 72 to 95 (RATT…TAAS) and 107 to 120 (SSIS…TSGS). Composition is skewed to low complexity over residues 184–202 (TAPP…ADSA) and 224–245 (ASSQ…SGRS). Residues 258 to 274 (SSPTVQRNQTTVHQQTC) are compositionally biased toward polar residues. Positions 290–940 (MSNPSHAEVP…SVFEAIRASK (651 aa)) are acetyl-coenzyme A synthetase. CoA contacts are provided by residues 480-483 (RRGK) and T599. ATP is bound by residues 675-677 (GEP), 699-704 (DTWWQT), D796, and R811. CoA is bound at residue S819. Residue R822 participates in ATP binding. Positions 833, 835, and 838 each coordinate Mg(2+). K906 bears the N6-acetyllysine mark.

This sequence belongs to the ATP-dependent AMP-binding enzyme family. Requires Mg(2+) as cofactor. Post-translationally, acetylated on Lys-906 by Pat in the presence of acetyl-CoA as an acetyl donor and ATP. Acetylation results in the inactivation of the enzyme. Deacetylation by the SIR2-homolog deacetylase CobB is required to activate the enzyme.

It catalyses the reaction acetate + ATP + CoA = acetyl-CoA + AMP + diphosphate. Functionally, catalyzes the conversion of acetate into acetyl-CoA (AcCoA), an essential intermediate at the junction of anabolic and catabolic pathways. AcsA undergoes a two-step reaction. In the first half reaction, AcsA combines acetate with ATP to form acetyl-adenylate (AcAMP) intermediate. In the second half reaction, it can then transfer the acetyl group from AcAMP to the sulfhydryl group of CoA, forming the product AcCoA. The polypeptide is Acetyl-coenzyme A synthetase (acsA) (Mycolicibacterium smegmatis (strain ATCC 700084 / mc(2)155) (Mycobacterium smegmatis)).